A 248-amino-acid chain; its full sequence is Protein PIMREG (248 aa).

Residues 1–10 show a composition bias toward polar residues; the sequence is MASRWQNMGT. Residues 1 to 32 are disordered; that stretch reads MASRWQNMGTSVRRRSLQHQEQLEDSKELQPV. A phosphoserine mark is found at serine 11 and serine 16. 2 short sequence motifs (D-box) span residues 14-17 and 53-56; these read RRSL and RLPL. Residues 117–205 form a disordered region; the sequence is KARRRKRGAQ…PSESDSDLEP (89 aa). Position 129 is a phosphoserine (serine 129). Serine 131 is subject to Phosphoserine; by UHMK1; in vitro. 2 stretches are compositionally biased toward polar residues: residues 132-143 and 186-198; these read PTHSLSQKSTRL and PYSS…SPSE. Residues serine 199 and serine 201 each carry the phosphoserine modification.

In terms of assembly, isoform 1 and isoform 2 interact with PICALM; this interaction may target PICALM to the nucleus. During mitosis, associates with HDAC2 and MTA2 subunits of the chromatin-remodeling NuRD complex; this association is strongest at prometaphase and decreases as the cell progresses through metaphase and anaphase. In terms of processing, ubiquitinated by the anaphase-promoting complex/cyclosome (APC/C) complex in the presence of FZR1, leading to its degradation by the proteasome during mitotic exit. However, degradation is not essential for normal mitotic progression within a single cell cycle. Expressed in thymus (at protein level). Detected in spleen, colon, ovary and small intestines.

Its subcellular location is the nucleus. It is found in the nucleolus. In terms of biological role, during mitosis, may play a role in the control of metaphase-to-anaphase transition. The chain is Protein PIMREG from Homo sapiens (Human).